Here is a 196-residue protein sequence, read N- to C-terminus: MVKSAYSYIRDAWKNPSKTYVGELFWERLQEWRKEPTVVKIDRPTRLDRARALGYKAKQGIIVARAHVRRGGRRKSRYSRGRKSKHMGLRTLTRRTSIQRMAEVRASRKFPNMEVLNSYWVGQDGKHKWYEIILVDPHHPSIASDKNLSWITKGTHRGRAERGLTSAGKKGRGQRRKGKGTEKNYPSVQAHDRRGK.

The tract at residues T155 to K196 is disordered. Basic residues predominate over residues K169 to G178.

It belongs to the eukaryotic ribosomal protein eL15 family.

This is Large ribosomal subunit protein eL15 from Methanocella arvoryzae (strain DSM 22066 / NBRC 105507 / MRE50).